The sequence spans 506 residues: Acetylcholine receptor subunit gamma (506 aa).

The first 17 residues, 1–17 (MVLTLLLIICLALEVRS), serve as a signal peptide directing secretion. Topologically, residues 18–235 (ENEEGRLIEK…IIFFLIIQRK (218 aa)) are extracellular. N-linked (GlcNAc...) asparagine glycosylation occurs at Asn85. Cysteines 145 and 159 form a disulfide. Transmembrane regions (helical) follow at residues 236-260 (PLFY…VYFL), 269-287 (CTLS…FLIA), and 303-324 (YLIF…VLNV). Residues 325–466 (SLRTPNTHSL…WVLIGKVIDK (142 aa)) lie on the Cytoplasmic side of the membrane. Tyr381 is modified (phosphotyrosine; by Tyr-kinases). The helical transmembrane segment at 467 to 490 (ACFWIALLLFSIGTLAIFLTGHFN) threads the bilayer.

This sequence belongs to the ligand-gated ion channel (TC 1.A.9) family. Acetylcholine receptor (TC 1.A.9.1) subfamily. Gamma/CHRNG sub-subfamily. In terms of assembly, pentamer of two alpha chains, and one each of the beta, delta, and gamma chains. Post-translationally, seems not to be glycosylated on Asn-158.

It is found in the postsynaptic cell membrane. Its subcellular location is the cell membrane. It carries out the reaction K(+)(in) = K(+)(out). The catalysed reaction is Na(+)(in) = Na(+)(out). Functionally, after binding acetylcholine, the AChR responds by an extensive change in conformation that affects all subunits and leads to opening of an ion-conducting channel across the plasma membrane. The chain is Acetylcholine receptor subunit gamma (CHRNG) from Tetronarce californica (Pacific electric ray).